Here is a 590-residue protein sequence, read N- to C-terminus: V-type ATP synthase alpha chain (590 aa).

An ATP-binding site is contributed by 231-238 (GPFGSGKT).

The protein belongs to the ATPase alpha/beta chains family.

The catalysed reaction is ATP + H2O + 4 H(+)(in) = ADP + phosphate + 5 H(+)(out). In terms of biological role, produces ATP from ADP in the presence of a proton gradient across the membrane. The V-type alpha chain is a catalytic subunit. The chain is V-type ATP synthase alpha chain from Clostridium botulinum (strain ATCC 19397 / Type A).